The sequence spans 427 residues: Dihydroorotase (427 aa).

The Zn(2+) site is built by His58 and His60. Residues 60 to 62 (HYR) and Asn92 contribute to the substrate site. Zn(2+) contacts are provided by Asp150, His177, and His230. A substrate-binding site is contributed by Asn276. Asp303 provides a ligand contact to Zn(2+). Asp303 is an active-site residue. Residues His307 and 321–322 (FG) each bind substrate.

This sequence belongs to the metallo-dependent hydrolases superfamily. DHOase family. Class I DHOase subfamily. It depends on Zn(2+) as a cofactor.

The enzyme catalyses (S)-dihydroorotate + H2O = N-carbamoyl-L-aspartate + H(+). It participates in pyrimidine metabolism; UMP biosynthesis via de novo pathway; (S)-dihydroorotate from bicarbonate: step 3/3. Its function is as follows. Catalyzes the reversible cyclization of carbamoyl aspartate to dihydroorotate. This is Dihydroorotase from Lactobacillus leichmannii.